Consider the following 439-residue polypeptide: MSKLYLMSLGCNKNLVDSEIMLGHLSAYELCDEPSKADVLIVNTCGFIDSAKKESINAILDLHEQRKKDSLLVVTGCLMQRYREELMKELPEVDLFTGVGDYERIDEMILKKTNLFSNSTYLQSENSKRIITGSNSHAFIKIAEGCNQKCSFCAIPSFKGKLKSREISSIIAELKDLVARGYKDFSFIAQDTSSYLFDKGEKDGLIRLIDEVEKIKGIRAARILYLYPTSASEALIKRIIASEIFINYFDMPLQHISDNMLKIMKRGANSTRLKEMLNLMKSAPNSFLRTGFIVGHPGESEADFEELCEFVKDFGFDRISVFAYSKEEDTAAFDMEQVPFKVINKRLKIIEKIVDEVIEKSFEKEVGQKRLVVCTGKSSEGEFFIAAKDLRWDREIDGEILINESECGNLEMGQIYECEILQNLDKKLLAKALRKVDAN.

Residues 2-114 (SKLYLMSLGC…IDEMILKKTN (113 aa)) enclose the MTTase N-terminal domain. [4Fe-4S] cluster-binding residues include Cys11, Cys45, Cys77, Cys146, Cys150, and Cys153. A Radical SAM core domain is found at 132 to 363 (TGSNSHAFIK…VDEVIEKSFE (232 aa)).

Belongs to the methylthiotransferase family. RimO subfamily. [4Fe-4S] cluster serves as cofactor.

The protein resides in the cytoplasm. It catalyses the reaction L-aspartate(89)-[ribosomal protein uS12]-hydrogen + (sulfur carrier)-SH + AH2 + 2 S-adenosyl-L-methionine = 3-methylsulfanyl-L-aspartate(89)-[ribosomal protein uS12]-hydrogen + (sulfur carrier)-H + 5'-deoxyadenosine + L-methionine + A + S-adenosyl-L-homocysteine + 2 H(+). Its function is as follows. Catalyzes the methylthiolation of an aspartic acid residue of ribosomal protein uS12. The protein is Ribosomal protein uS12 methylthiotransferase RimO of Campylobacter jejuni subsp. jejuni serotype O:2 (strain ATCC 700819 / NCTC 11168).